The following is a 117-amino-acid chain: Large ribosomal subunit protein uL18 (117 aa).

Belongs to the universal ribosomal protein uL18 family. As to quaternary structure, part of the 50S ribosomal subunit; part of the 5S rRNA/L5/L18/L25 subcomplex. Contacts the 5S and 23S rRNAs.

Its function is as follows. This is one of the proteins that bind and probably mediate the attachment of the 5S RNA into the large ribosomal subunit, where it forms part of the central protuberance. In Blochmanniella pennsylvanica (strain BPEN), this protein is Large ribosomal subunit protein uL18.